A 130-amino-acid polypeptide reads, in one-letter code: Small ribosomal subunit protein uS8 (130 aa).

The protein belongs to the universal ribosomal protein uS8 family. Part of the 30S ribosomal subunit. Contacts proteins S5 and S12.

Its function is as follows. One of the primary rRNA binding proteins, it binds directly to 16S rRNA central domain where it helps coordinate assembly of the platform of the 30S subunit. In Pectobacterium carotovorum subsp. carotovorum (strain PC1), this protein is Small ribosomal subunit protein uS8.